The following is a 1363-amino-acid chain: Neurexin-1 (1363 aa).

Over 1–1287 (SKRRDMTVFS…EVIRESSSTT (1287 aa)) the chain is Extracellular. Asparagine 49 is a glycosylation site (N-linked (GlcNAc...) asparagine). Positions 67–105 (QSRLCAREDVCLNGGVCSVLNDQAVCDCSQTGFRGKDCS) constitute an EGF-like 1 domain. Disulfide bonds link cysteine 71–cysteine 83, cysteine 77–cysteine 92, and cysteine 94–cysteine 104. 2 consecutive Laminin G-like domains span residues 132–329 (IATF…AFKC) and 336–528 (DPIT…KPSC). Residues aspartate 178, leucine 195, and methionine 263 each contribute to the Ca(2+) site. 5 disulfide bridges follow: cysteine 293-cysteine 329, cysteine 499-cysteine 528, cysteine 536-cysteine 547, cysteine 541-cysteine 556, and cysteine 558-cysteine 568. The 38-residue stretch at 532–569 (TAKPCLSNPCKNNGVCRDGWNRYVCDCSGTGYLGRSCE) folds into the EGF-like 2 domain. Laminin G-like domains follow at residues 574-747 (ILSY…IDYC) and 761-936 (DPVT…ERGC). N-linked (GlcNAc...) asparagine glycosylation is present at asparagine 646. 4 disulfide bridges follow: cysteine 908-cysteine 936, cysteine 943-cysteine 954, cysteine 948-cysteine 963, and cysteine 965-cysteine 975. Residues 939-976 (PSTTCQEDSCANQGVCLQQWDGFSCDCSMTSFSGPLCN) enclose the EGF-like 3 domain. The Laminin G-like 5 domain maps to 982–1180 (YIFSKGGGQI…DANIVIEGNV (199 aa)). N-linked (GlcNAc...) asparagine glycosylation occurs at asparagine 1079. Positions 1244-1280 (CPSDDEDIDPCEPSSGGLANPTRAGGGREYPGSSEVI) are disordered. The helical transmembrane segment at 1288–1308 (GMVVGIVAAAALCILILLYAM) threads the bilayer. Topologically, residues 1309-1363 (YKYRNRDEGSYHVDESRNYISNSAQSNGAVIKEKQPNSAKSSNKNKKNKDKEYYV) are cytoplasmic. The disordered stretch occupies residues 1330-1363 (NSAQSNGAVIKEKQPNSAKSSNKNKKNKDKEYYV).

This sequence belongs to the neurexin family. As to quaternary structure, the cytoplasmic C-terminal region binds to CASK. The laminin G-like domain 1 binds to NXPH1. Specific isoforms bind to alpha-dystroglycan and to alpha-latrotoxin. In terms of processing, N- and O-glycosylated.

Its subcellular location is the membrane. In terms of biological role, neuronal cell surface protein that may be involved in cell recognition and cell adhesion. May mediate intracellular signaling. In Gallus gallus (Chicken), this protein is Neurexin-1 (NRXN1).